Here is a 2272-residue protein sequence, read N- to C-terminus: MSTEAKRRRNQKKKQKQKQKKAAEKMQEQASLESTLGSPIDVSIFEQQQYGGAEDAEAAGAAAARESADESRGASVESSGSTDNAIGDDRAGSAPSPYVAVGDSAAVSTAVEVSAPLQDEAFSAVDVEATESPASALPAASVEESEHVSIATPAEPSAAPVAPEAAASEENVVQMAGENGTNPEADVPIEDESNFLFGDSPHSPLPWDDGGASDPEQRPEMTEERPELPTFEEERTQHTSLLPSTSNEHKTPQEALSSEEDQAAEPEQNIGVCDGHAEDSTVDVEWEQHTSSSELFGEEHDTPHSPLPWEEQEAAAPEENRSRMEEHKESISGDERDQDVPITEDSAKTGSLPEDTVPGENTPGDIPETATSAKNVDFDSANGTGNVPVESQAHSTTHTPEEYAADSNSLFALEDDGGDFLAELSNGHDVSSQSAADMLPIDDNVPRTTFDGADALAGPAETYEPGDLFADEDTAEEPPWAQNTNPNVDTSQQLPVSRSSAELSSSQAAKETPGIEVPPPMFWDEESDSIEASNDQLAFTPVAQRGKVTLPDKKFSFLDNDDDLLNDDEEEEANAGDQPENDQENCDDDSFLDSDEEPPLLPPKAGKTTYTPSTQVLGQDRSSYDAHNLSSSMAVSPAVAAVTGQQQFLPGPPVPEKPKVGKYALPKQPNPPPQTNKGYYAPTLGGVGLEATDKPPVLSVNDESVRRLEEEKKKSDAYDFPLELVKSKPKPAKPVPVPSIPSIVTASQPASRSFSPSDAQPVFSPEKAGITPLKPTVPPVKNPYQPNFDGNYLSLVDAVNSRTSSVQQNPYAPPPVNVGPQVTSEKPYAAYEGAASGSQSQHPFPPQPLGAYGTNAPKPPLNSYNLAAAQMDSPKERRPAAYVNTSRTRAISNASVGSSGSYNSHQLPAGPTVVPPRFAFPPPQAHISPTIPALQTVGIAGAPPAVSSPGTQRRTHARSHSSVYAPANAPHASKYAPTVHPSVQQKYPSVAGPSKRSLAGNGVPDGVSNRVLPPTIQEVPVDGHALNFRQFPLFNWSQTSKIVYGLSLPIDTGNYMLGKPFPVSGIHVRNSESILVPNVILKDFPGPLIKGKTRTKDLEKWLELSIAYQRESLPGRDLTLWYVLKHKLSTSGSLRELSKILYDSDQLIPYMGQMHSHGRPTLLSHKLDPNSQMQILAHLQVGSPGAALDLALAQKDYALALVLSSLIGKDKWSEVVDTYLREEFSVSAGNNQFSVYLLALIFQVFVGNSNRVLQELTANPLKRDWAIQDWNIILAAVLNNIPKDVDPRQLPPVVMEFLVGFGVFLVQSGKLAAGAVCFVIANVPLSQNELLPHSGVKFECLGSINSLDAVLLSEVYEYYYTTINDNCPFFASLLLMKTVHASALLDYGLPTTVPKYLDVITGLLRNAPKNSAIAVSLTHQLESINLRLSGVTTAWIGKPTLSSVWGQLDKSFNKFIGGDADDFSKQPEKTVFDSFTPSASRNASMVDLNHGVTPMRPSAIKNSGVNRSHTDLPVSNKGGYAPLNAPGSNVFSVSRSNNHPHGTEHGNSMSNLHGDSQHLTHKTNYTPHRASNLISPKYPEEPQNSHLPNQQSNLPSPANGHSRNPSIPSVATPPPIFSAPPKRARGKYAATASGAVSVDQLYSDAGHSNTPTKVKSVPTCPEIAETPAALATRQATDSMTDFFAPPLLQAGLQQDRRSSAYSASSQGILPSSRRSSNISDVMLPPKKSGSGKPYRKTTVNYTPIDMEASSLAPSSVSLSQSTGDTTTEVKRARNSGEASNSSATEVADSTVLHKSPESVDTSEYSFPDESVQSWEENAEDDQDPLHTVSAISNTEVPVDKRDGERGSQNTLTKAAPYSDLAPYEHEGNAPSTESPAIKGSRVQVQVQVTPPEDFAHIQSQVVSPEKEASPTVEKGANANESSPDLHERQPYAGLGVSYNPNTGGPRPFASHQYLPRAPAVPAYSPIEENAAEEGRTDNQTKAVEKQEHAVLKRTVSGPVIGSEKLMSPALAHPIPRTSRFEPIKEIIQNDEDTFRKDKVPVIRASSNPNFNPYTPVASEQYYDDVVEDESDDSEEESERKRQEKEKEEERKREAAEKEKRKNEGGGSSRWFGWLKKDTNEKKPIKAKLGQKNNFYYDEKLKRWVNKDATEEEKQKVSTPPPPPPVVKRKMNTTPEIKPRSGSVVGGPAIRTQGAVAPVNPQDPQPCQAVVGASSALQKQASPVKPRDPAINLTSKKANGLDDLISLTAGPSNAVSRRKKKPGRGYVNVLNNL.

Over residues 1–20 the composition is skewed to basic residues; that stretch reads MSTEAKRRRNQKKKQKQKQK. Disordered regions lie at residues 1 to 99, 124 to 401, 430 to 630, 646 to 714, 727 to 785, 832 to 852, 1488 to 1624, 1694 to 1737, 1750 to 1990, 2043 to 2125, and 2146 to 2187; these read MSTE…SPYV, AVDV…HTPE, VSSQ…HNLS, QQFL…EKKK, SKPK…NPYQ, EGAA…LGAY, LNHG…PKRA, QDRR…YRKT, SLAP…EHAV, RASS…KPIK, and KDAT…VGGP. Residues 151-170 show a composition bias toward low complexity; that stretch reads ATPAEPSAAPVAPEAAASEE. Composition is skewed to basic and acidic residues over residues 215–237 and 318–339; these read PEQR…ERTQ and EENR…RDQD. Over residues 481–496 the composition is skewed to polar residues; that stretch reads AQNTNPNVDTSQQLPV. Residues 497–509 show a composition bias toward low complexity; the sequence is SRSSAELSSSQAA. A compositionally biased stretch (acidic residues) spans 559–598; that stretch reads DNDDDLLNDDEEEEANAGDQPENDQENCDDDSFLDSDEEP. Residues 608–621 show a composition bias toward polar residues; it reads TTYTPSTQVLGQDR. Over residues 703–714 the composition is skewed to basic and acidic residues; the sequence is ESVRRLEEEKKK. Polar residues predominate over residues 748–758; that stretch reads QPASRSFSPSD. Composition is skewed to polar residues over residues 1526-1554, 1582-1609, and 1699-1719; these read PGSN…NLHG, PQNS…SIPS, and SAYS…SNIS. A compositionally biased stretch (low complexity) spans 1750 to 1761; sequence SLAPSSVSLSQS. Over residues 1798–1815 the composition is skewed to polar residues; the sequence is SVDTSEYSFPDESVQSWE. Residues 1972–1990 are compositionally biased toward basic and acidic residues; that stretch reads EEGRTDNQTKAVEKQEHAV. Over residues 2061 to 2076 the composition is skewed to acidic residues; the sequence is YYDDVVEDESDDSEEE. Composition is skewed to basic and acidic residues over residues 2077–2103, 2114–2123, and 2146–2155; these read SERK…RKNE, LKKDTNEKKP, and KDATEEEKQK.

Belongs to the SEC16 family.

It is found in the endoplasmic reticulum membrane. In terms of biological role, involved in the initiation of assembly of the COPII coat required for the formation of transport vesicles from the endoplasmic reticulum (ER) and the selection of cargo molecules. Also involved in autophagy. The protein is COPII coat assembly protein SEC16 (SEC16) of Eremothecium gossypii (strain ATCC 10895 / CBS 109.51 / FGSC 9923 / NRRL Y-1056) (Yeast).